The following is a 352-amino-acid chain: uncharacterized protein (352 aa).

8 consecutive transmembrane segments (helical) span residues 6-26, 30-50, 76-96, 151-171, 197-217, 226-246, 291-311, and 330-350; these read FIFLMFISIGILLLLLNIINP, FHIVEWKTIFSLFYLMVIINI, IFLTLFLSSLITNDVSLFVII, EFIINMIPFEIFGILAILPFL, FILVLLCVFGYLNFIYILPLI, VKVDYLFLLTFIFLFVDIEGL, WLPIAYGVNIGGNGTLIASFA, and LIGGIIYIMHLIVLVAYAKIF.

This sequence belongs to the CitM (TC 2.A.11) transporter family.

It localises to the cell membrane. This is an uncharacterized protein from Methanocaldococcus jannaschii (strain ATCC 43067 / DSM 2661 / JAL-1 / JCM 10045 / NBRC 100440) (Methanococcus jannaschii).